We begin with the raw amino-acid sequence, 124 residues long: Large ribosomal subunit protein bL12 (124 aa).

The segment covering 101-115 (ALSKDDAEKAKKELE) has biased composition (basic and acidic residues). The interval 101 to 124 (ALSKDDAEKAKKELEEAGATVELK) is disordered.

Belongs to the bacterial ribosomal protein bL12 family. As to quaternary structure, homodimer. Part of the ribosomal stalk of the 50S ribosomal subunit. Forms a multimeric L10(L12)X complex, where L10 forms an elongated spine to which 2 to 4 L12 dimers bind in a sequential fashion. Binds GTP-bound translation factors.

Forms part of the ribosomal stalk which helps the ribosome interact with GTP-bound translation factors. Is thus essential for accurate translation. The sequence is that of Large ribosomal subunit protein bL12 from Hahella chejuensis (strain KCTC 2396).